Here is a 227-residue protein sequence, read N- to C-terminus: 2-C-methyl-D-erythritol 4-phosphate cytidylyltransferase (227 aa).

This sequence belongs to the IspD/TarI cytidylyltransferase family. IspD subfamily.

The catalysed reaction is 2-C-methyl-D-erythritol 4-phosphate + CTP + H(+) = 4-CDP-2-C-methyl-D-erythritol + diphosphate. It functions in the pathway isoprenoid biosynthesis; isopentenyl diphosphate biosynthesis via DXP pathway; isopentenyl diphosphate from 1-deoxy-D-xylulose 5-phosphate: step 2/6. Catalyzes the formation of 4-diphosphocytidyl-2-C-methyl-D-erythritol from CTP and 2-C-methyl-D-erythritol 4-phosphate (MEP). In Nostoc punctiforme (strain ATCC 29133 / PCC 73102), this protein is 2-C-methyl-D-erythritol 4-phosphate cytidylyltransferase.